The sequence spans 473 residues: MTQDISEKIEVISINDSQPEDSSPVVPHERQVVDCVIEIWKEDPSTESLGMSKLHALVKQKHPNWSISEKRVRSLLKQFGLAFNNQEQFTYAKEITSVMTPDIELPANVHIIMTSKRGKGLYAKRDIAKGDLIWSEEPLFFIPPLANVNLMKTASACTYCGKLLQRTESATVLKGLDCNVCSEVWCSIKCKHLDGNLHSLLKHNLYNPGSKKHKLIDAEAFLELQDYCLEEQWNALYAITLIYANCITDKSGVKQKQFDAMARVSQDVRYKALNSSAGTFDSLNGGALFVQEQQEHLWKIGYEKFLRVFPKKPVEYREFLFMMGTYNINNLDSNVFLTQSHLNHNCASNTSVETELNRTAGLKVIAGRDIKSGEELTTTYVNPSHTVHQRQRELRVNWGFICACAKCKDDLKQNERRKSSHNQQQNANNIRDMLKETKDAVGEEGIELEIPTEFNGERRKSVRFDEKVVAVKE.

The SET domain occupies 107–381; sequence ANVHIIMTSK…SGEELTTTYV (275 aa).

This sequence belongs to the class V-like SAM-binding methyltransferase superfamily. Histone-lysine methyltransferase family. SET5 subfamily.

Its subcellular location is the nucleus. It is found in the chromosome. The protein resides in the cytoplasm. The enzyme catalyses L-lysyl-[histone] + S-adenosyl-L-methionine = N(6)-methyl-L-lysyl-[histone] + S-adenosyl-L-homocysteine + H(+). Histone methyltransferase that monomethylates 'Lys-5', 'Lys-8' and 'Lys-12' of histone H4 (H4K5me1, H4K8me1 and H4K12me1, respectively), thereby controlling gene expression and remodeling chromatin structures. This is Histone-lysine N-methyltransferase SET5 (SET5) from Candida albicans (strain SC5314 / ATCC MYA-2876) (Yeast).